The following is a 316-amino-acid chain: HPr kinase/phosphorylase (316 aa).

Active-site residues include histidine 141 and lysine 162. Position 156-163 (156-163) interacts with ATP; that stretch reads GESGVGKS. Residue serine 163 coordinates Mg(2+). The active-site Proton acceptor; for phosphorylation activity. Proton donor; for dephosphorylation activity is aspartate 180. Residues 204–213 are important for the catalytic mechanism of both phosphorylation and dephosphorylation; the sequence is MEIRGIGIID. Glutamate 205 lines the Mg(2+) pocket. Residue arginine 246 is part of the active site. The segment at 267–272 is important for the catalytic mechanism of dephosphorylation; it reads PVKVGR.

Belongs to the HPrK/P family. In terms of assembly, homohexamer. Mg(2+) is required as a cofactor.

It catalyses the reaction [HPr protein]-L-serine + ATP = [HPr protein]-O-phospho-L-serine + ADP + H(+). It carries out the reaction [HPr protein]-O-phospho-L-serine + phosphate + H(+) = [HPr protein]-L-serine + diphosphate. Functionally, catalyzes the ATP- as well as the pyrophosphate-dependent phosphorylation of a specific serine residue in HPr, a phosphocarrier protein of the phosphoenolpyruvate-dependent sugar phosphotransferase system (PTS). HprK/P also catalyzes the pyrophosphate-producing, inorganic phosphate-dependent dephosphorylation (phosphorolysis) of seryl-phosphorylated HPr (P-Ser-HPr). The two antagonistic activities of HprK/P are regulated by several intracellular metabolites, which change their concentration in response to the absence or presence of rapidly metabolisable carbon sources (glucose, fructose, etc.) in the growth medium. Therefore, by controlling the phosphorylation state of HPr, HPrK/P is a sensor enzyme that plays a major role in the regulation of carbon metabolism and sugar transport: it mediates carbon catabolite repression (CCR), and regulates PTS-catalyzed carbohydrate uptake and inducer exclusion. The protein is HPr kinase/phosphorylase of Lactobacillus delbrueckii subsp. bulgaricus (strain ATCC 11842 / DSM 20081 / BCRC 10696 / JCM 1002 / NBRC 13953 / NCIMB 11778 / NCTC 12712 / WDCM 00102 / Lb 14).